We begin with the raw amino-acid sequence, 595 residues long: Probable serine/threonine-protein kinase KIN1 homolog (595 aa).

Residues 67–316 (YKLIKTLGKG…LENVKKSKWT (250 aa)) enclose the Protein kinase domain. ATP-binding positions include 73 to 81 (LGKGSCAKV) and Lys96. The active-site Proton acceptor is the Asp188.

Belongs to the protein kinase superfamily. CAMK Ser/Thr protein kinase family. NIM1 subfamily.

It is found in the cytoplasm. The protein resides in the cell membrane. It catalyses the reaction L-seryl-[protein] + ATP = O-phospho-L-seryl-[protein] + ADP + H(+). The enzyme catalyses L-threonyl-[protein] + ATP = O-phospho-L-threonyl-[protein] + ADP + H(+). Serine/threonine protein kinase involved in regulation of exocytosis. This chain is Probable serine/threonine-protein kinase KIN1 homolog (KIN1), found in Enterocytozoon bieneusi (strain H348) (Microsporidian parasite).